A 346-amino-acid chain; its full sequence is Flap endonuclease 1 (346 aa).

The tract at residues 1–100 (MGVDIKELVE…KELERRYQIK (100 aa)) is N-domain. The Mg(2+) site is built by Asp29, Asp82, Glu154, Glu156, Asp175, Asp177, and Asp238. The interval 118–260 (EARIYAQQTS…KALKLVKELK (143 aa)) is I-domain. An interaction with PCNA region spans residues 336 to 344 (KQQSLESWF).

It belongs to the XPG/RAD2 endonuclease family. FEN1 subfamily. Interacts with PCNA. PCNA stimulates the nuclease activity without altering cleavage specificity. The cofactor is Mg(2+).

Functionally, structure-specific nuclease with 5'-flap endonuclease and 5'-3' exonuclease activities involved in DNA replication and repair. During DNA replication, cleaves the 5'-overhanging flap structure that is generated by displacement synthesis when DNA polymerase encounters the 5'-end of a downstream Okazaki fragment. Binds the unpaired 3'-DNA end and kinks the DNA to facilitate 5' cleavage specificity. Cleaves one nucleotide into the double-stranded DNA from the junction in flap DNA, leaving a nick for ligation. Also involved in the base excision repair (BER) pathway. Acts as a genome stabilization factor that prevents flaps from equilibrating into structures that lead to duplications and deletions. Also possesses 5'-3' exonuclease activity on nicked or gapped double-stranded DNA. In Thermofilum pendens (strain DSM 2475 / Hrk 5), this protein is Flap endonuclease 1.